The primary structure comprises 195 residues: Imidazoleglycerol-phosphate dehydratase (195 aa).

The protein belongs to the imidazoleglycerol-phosphate dehydratase family.

It localises to the cytoplasm. It catalyses the reaction D-erythro-1-(imidazol-4-yl)glycerol 3-phosphate = 3-(imidazol-4-yl)-2-oxopropyl phosphate + H2O. The protein operates within amino-acid biosynthesis; L-histidine biosynthesis; L-histidine from 5-phospho-alpha-D-ribose 1-diphosphate: step 6/9. This chain is Imidazoleglycerol-phosphate dehydratase, found in Paracoccus denitrificans (strain Pd 1222).